The sequence spans 113 residues: Dynein light chain Tctex-type 1 (113 aa).

The residue at position 1 (Met1) is an N-acetylmethionine. The interaction with GNB1 stretch occupies residues 41–113; sequence QWTTNVLEQT…CIVSTFGLSI (73 aa).

Belongs to the dynein light chain Tctex-type family. Homodimer. The cytoplasmic dynein 1 complex consists of two catalytic heavy chains (HCs) and a number of non-catalytic subunits presented by intermediate chains (ICs), light intermediate chains (LICs) and light chains (LCs); the composition seems to vary in respect to the IC, LIC and LC composition. The heavy chain homodimer serves as a scaffold for the probable homodimeric assembly of the respective non-catalytic subunits. The ICs and LICs bind directly to the HC dimer and the LCs assemble on the IC dimer. DYNLT1 and DYNLT3 compete for association with dynein IC (DYNC1I1 or DYNC1I2). Self-associates. Interacts with RHO. Interacts with DYNC1I1 and DYNC1I2. Interacts with DOC2A, DOC2B and SCN10A. Interacts with PVR. Interacts with SVIL isoform 2. Interacts with GNB1; the interaction occurs in presence of guanine nucleotide-binding protein G(T) subunit gamma; the interaction diminishes the association of DYNLT1 with dynein IC (DYNC1I1 or DYNC1I2). Interacts with GNB2, GNB3 and GNB5; the interactions occur in presence of guanine nucleotide-binding protein G(T) subunit gamma. Interacts with ACVR2B and ARHGEF2. Interacts with DNAI4. Interacts with CFAP61. Phosphorylated by BMPR2. The phosphorylation status is proposed to regulate the association with the cytoplasmic dynein complex and may have role in cytoplasmic dynein cargo release. In terms of tissue distribution, high level in testis (germ cell-specific). Expressed in sperm (at protein level). 200-fold lower in liver, brain, heart, spleen, and kidney. Levels in thymus and two embryonal carcinoma cell lines were several-fold higher than this low constitutive level.

The protein resides in the golgi apparatus. It is found in the cytoplasm. Its subcellular location is the cytoskeleton. It localises to the spindle. Its function is as follows. Acts as one of several non-catalytic accessory components of the cytoplasmic dynein 1 complex that are thought to be involved in linking dynein to cargos and to adapter proteins that regulate dynein function. Cytoplasmic dynein 1 acts as a motor for the intracellular retrograde motility of vesicles and organelles along microtubules. Binds to transport cargos and is involved in apical cargo transport such as rhodopsin-bearing vesicles in polarized epithelia. May also be a accessory component of axonemal dynein. Plays an important role in male germ cell development and function. Candidate for involvement in male sterility. Functionally, plays a role in neuronal morphogenesis; the function is independent of cytoplasmic dynein and seems to be coupled to regulation of the actin cytoskeleton by enhancing Rac1 activity. The function in neurogenesis may be regulated by association with a G-protein beta-gamma dimer. May function as a receptor-independent activator of heterotrimeric G-protein signaling; the activation appears to be independent of a nucleotide exchange. Plays a role in regulating neurogenesis; inhibits the genesis of neurons from precursor cells during cortical development presumably by antagonizing ARHGEF2. Unrelated to the role in retrograde microtubule-associated movement may play a role in the dimerization of cytoplasmic proteins/domains such as for ACVR2B. Binds to the cytoplasmic domain of ACVR2B and, in vitro, inhibits ACVR2B signaling. Involved in the regulation of mitotic spindle orientation. This is Dynein light chain Tctex-type 1 (Dynlt1) from Mus musculus (Mouse).